A 134-amino-acid chain; its full sequence is Profilin-2 (134 aa).

Cysteine 13 and cysteine 118 are disulfide-bonded. Positions 84-100 match the Involved in PIP2 interaction motif; that stretch reads AVIRGKKGSGGITIKKT. The residue at position 114 (threonine 114) is a Phosphothreonine.

The protein belongs to the profilin family. In terms of assembly, occurs in many kinds of cells as a complex with monomeric actin in a 1:1 ratio. In terms of processing, phosphorylated by MAP kinases.

The protein resides in the cytoplasm. The protein localises to the cytoskeleton. Its function is as follows. Binds to actin and affects the structure of the cytoskeleton. At high concentrations, profilin prevents the polymerization of actin, whereas it enhances it at low concentrations. This chain is Profilin-2, found in Olea europaea (Common olive).